The primary structure comprises 357 residues: MGGEVSNKTWVFKQSPSGLPEPGVHTAFEDRPLSLVAPPGGLVINLLTAGLDPHQRDRMRGAGNVDYVPGYEVNEPITNFSIAKVIRSDNAAFEEGSLIAGSLPIAEYGIIPKELIDARAMASPLVWKVSNDYNLDVKHYVGTLGLAGMTAWNSFYGLVKPVKGETIWVNAASSSVGEVVVQLAKIEGMKVIASVSSDDKLDYVVNELGADVGFNYRKEPVGKALKRLAPDGLDVVFENVGGDHFQAAIENMKWFGRIISCGTASQYNKPVEEQYGVTNLSEIFRRRIKIQGFIFWDDNIYTDNIENFKATMPKWVSEGKIKSRYTQFEGIEQADKAFLSMFTGGSHGKTVLKISDP.

Over residues Met-1–Ser-17 the composition is skewed to polar residues. The segment at Met-1–Pro-22 is disordered.

This sequence belongs to the zinc-containing alcohol dehydrogenase family. Quinone oxidoreductase subfamily.

It participates in mycotoxin biosynthesis. Its function is as follows. Dehydrogenase; part of the gene cluster that mediates the biosynthesis of fusaric acid, a mycotoxin with low to moderate toxicity to animals and humans, but with high phytotoxic properties. L-aspartate is suggested as fusaric acid amino acid precursor that is activated and further processed to O-acetyl-L-homoserine by cluster enzymes aspartate kinase FUB3 and homoserine O-acetyltransferase FUB5, as well as enzymes of the primary metabolism. The polyketide synthase (PKS) FUB1 generates the triketide trans-2-hexenal which is presumptively released by the hydrolase FUB4 and linked to the NRPS-bound amino acid precursor by NAD(P)-dependent dehydrogenase FUB6. FUB1, FUB4, and the non-canonical NRPS Fub8 may form an enzyme complex. Further processing of the NRPS-bound intermediate might be carried out by FUB6 and the O-acetylhomoserine FUB7, enabling a spontaneous electrocyclization to close the carbon backbone of fusaric acid. Dihydrofusaric acid is likely to be released via reduction by the thioester reductase (TR) domain of FUB8 whereupon the final oxidation to fusaric acid may (also) be performed by the FMN-dependent dehydrogenase FUB9. The protein is Dehydrogenase FUB6 of Fusarium oxysporum f. sp. lycopersici (strain 4287 / CBS 123668 / FGSC 9935 / NRRL 34936) (Fusarium vascular wilt of tomato).